We begin with the raw amino-acid sequence, 32 residues long: SYVITTPKMWVMPYGCGEQNMVNFAPNIFIME.

A cross-link (isoglutamyl cysteine thioester (Cys-Gln)) is located at residues 16-19; sequence CGEQ.

This sequence belongs to the protease inhibitor I39 (alpha-2-macroglobulin) family. In terms of assembly, homodimer; disulfide-linked.

Its subcellular location is the secreted. Functionally, is able to inhibit all four classes of proteinases by a unique 'trapping' mechanism. This protein has a peptide stretch, called the 'bait region' which contains specific cleavage sites for different proteinases. When a proteinase cleaves the bait region, a conformational change is induced in the protein which traps the proteinase. The entrapped enzyme remains active against low molecular weight substrates (activity against high molecular weight substrates is greatly reduced). Following cleavage in the bait region a thioester bond is hydrolyzed and mediates the covalent binding of the protein to the proteinase. In Pacifastacus leniusculus (Signal crayfish), this protein is Alpha-2-macroglobulin homolog.